We begin with the raw amino-acid sequence, 902 residues long: Calcium-activated chloride channel regulator 3A-1 (902 aa).

The signal sequence occupies residues 1-21 (MVPGLQVLLFLTLHLLQNTES). The metalloprotease domain stretch occupies residues 45–199 (DERLIPSIKE…RITGTNVVHN (155 aa)). Residue N75 is glycosylated (N-linked (GlcNAc...) asparagine). H155 provides a ligand contact to Zn(2+). The active site involves E156. Positions 159 and 166 each coordinate Zn(2+). The region spanning 308 to 476 (VVCLVLDKSG…NSLIDAFSRI (169 aa)) is the VWFA domain. Residues N504, N515, N630, N687, N697, N809, and N814 are each glycosylated (N-linked (GlcNAc...) asparagine).

It belongs to the CLCR family. In terms of assembly, part of a complex composed of complement component C3, CLCA1/CLCA3, A2ML1/OH and ALB/serum albumin. Post-translationally, glycosylated. The 130-kDa product is autoproteolytically processed by the metalloprotease domain and yields two subunits, a 90-kDa protein and a group of 32- to 38-kDa proteins. The cleavage is necessary for calcium-activated chloride channel (CaCC) activation activity. Highly expressed in skin and spleen, and at lower levels in kidney and liver. Also detected in lung and brain. Not detected in lung or brain. In lung, localizes to respiratory epithelia of the bronchi and trachea and the submucosal glands.

The protein localises to the cell membrane. Functionally, plays a role in modulating chloride current across the plasma membrane in a calcium-dependent manner. The protein is Calcium-activated chloride channel regulator 3A-1 of Mus musculus (Mouse).